The chain runs to 438 residues: MVSALNPRTTEFEFGGLIGALGISIGLPVFTIILNQMIRPDYFIKGFFQNFDIVELWNGIKPLRYYLGNRELWTVYCLWYGILAVLDVILPGRVMKGVQLRDGSKLSYKINGIAMSTTLVLVLAIRWKLTDGQLPELQYLYENHVSLCIISILFSFFLATYCYVASFIPLIFKKNGNGKREKILALGGNSGNIIYDWFIGRELNPRLGPLDIKMFSELRPGMLLWLLINLSCLHHHYLKTGKINDALVLVNFLQGFYIFDGVLNEEGVLTMMDITTDGFGFMLAFGDLSLVPFTYSLQARYLSVSPVELGWVKVVGILAIMFLGFHIFHSANKQKSEFRQGKLENLKSIQTKRGTKLLCDGWWAKSQHINYFGDWLISLSWCLATWFQTPLTYYYSLYFATLLLHRQQRDEHKCRLKYGENWEEYERKVPYKIIPYVY.

Residues 1-13 are Lumenal-facing; the sequence is MVSALNPRTTEFE. A helical transmembrane segment spans residues 14–34; sequence FGGLIGALGISIGLPVFTIIL. Residues 35–71 lie on the Cytoplasmic side of the membrane; sequence NQMIRPDYFIKGFFQNFDIVELWNGIKPLRYYLGNRE. The chain crosses the membrane as a helical span at residues 72–90; the sequence is LWTVYCLWYGILAVLDVIL. The Lumenal segment spans residues 91–109; that stretch reads PGRVMKGVQLRDGSKLSYK. Residues 110 to 127 traverse the membrane as a helical segment; the sequence is INGIAMSTTLVLVLAIRW. Residues 128-147 are Cytoplasmic-facing; that stretch reads KLTDGQLPELQYLYENHVSL. Residues 148 to 172 form a helical membrane-spanning segment; sequence CIISILFSFFLATYCYVASFIPLIF. Over 173-242 the chain is Lumenal; it reads KKNGNGKREK…LHHHYLKTGK (70 aa). The chain crosses the membrane as a helical span at residues 243–263; it reads INDALVLVNFLQGFYIFDGVL. Residues 264–308 are Cytoplasmic-facing; sequence NEEGVLTMMDITTDGFGFMLAFGDLSLVPFTYSLQARYLSVSPVE. The helical transmembrane segment at 309 to 328 threads the bilayer; it reads LGWVKVVGILAIMFLGFHIF. The Lumenal segment spans residues 329-368; the sequence is HSANKQKSEFRQGKLENLKSIQTKRGTKLLCDGWWAKSQH. NADP(+)-binding positions include lysine 335, arginine 339, leucine 358, tryptophan 363, 370 to 371, aspartate 410, 414 to 418, and tyrosine 425; these read NY and CRLKY. A helical transmembrane segment spans residues 369 to 387; it reads INYFGDWLISLSWCLATWF. Topologically, residues 388–438 are cytoplasmic; the sequence is QTPLTYYYSLYFATLLLHRQQRDEHKCRLKYGENWEEYERKVPYKIIPYVY.

It belongs to the ERG4/ERG24 family.

The protein resides in the membrane. It catalyses the reaction 4,4-dimethyl-5alpha-cholesta-8,24-dien-3beta-ol + NADP(+) = 4,4-dimethyl-5alpha-cholesta-8,14,24-trien-3beta-ol + NADPH + H(+). Its pathway is steroid biosynthesis; zymosterol biosynthesis; zymosterol from lanosterol: step 2/6. Inhibited by the morpholine antifungal drug fenpropimorph. Its function is as follows. Delta(14)-sterol reductase; part of the third module of ergosterol biosynthesis pathway that includes the late steps of the pathway. ERG24 reduces the C14=C15 double bond of 4,4-dimethyl-cholesta-8,14,24-trienol to produce 4,4-dimethyl-cholesta-8,24-dienol. The third module or late pathway involves the ergosterol synthesis itself through consecutive reactions that mainly occur in the endoplasmic reticulum (ER) membrane. Firstly, the squalene synthase ERG9 catalyzes the condensation of 2 farnesyl pyrophosphate moieties to form squalene, which is the precursor of all steroids. Squalene synthase is crucial for balancing the incorporation of farnesyl diphosphate (FPP) into sterol and nonsterol isoprene synthesis. Secondly, the squalene epoxidase ERG1 catalyzes the stereospecific oxidation of squalene to (S)-2,3-epoxysqualene, which is considered to be a rate-limiting enzyme in steroid biosynthesis. Then, the lanosterol synthase ERG7 catalyzes the cyclization of (S)-2,3 oxidosqualene to lanosterol, a reaction that forms the sterol core. In the next steps, lanosterol is transformed to zymosterol through a complex process involving various demethylation, reduction and desaturation reactions. The lanosterol 14-alpha-demethylase ERG11 (also known as CYP51) catalyzes C14-demethylation of lanosterol to produce 4,4'-dimethyl cholesta-8,14,24-triene-3-beta-ol, which is critical for ergosterol biosynthesis. The C-14 reductase ERG24 reduces the C14=C15 double bond of 4,4-dimethyl-cholesta-8,14,24-trienol to produce 4,4-dimethyl-cholesta-8,24-dienol. 4,4-dimethyl-cholesta-8,24-dienol is substrate of the C-4 demethylation complex ERG25-ERG26-ERG27 in which ERG25 catalyzes the three-step monooxygenation required for the demethylation of 4,4-dimethyl and 4alpha-methylsterols, ERG26 catalyzes the oxidative decarboxylation that results in a reduction of the 3-beta-hydroxy group at the C-3 carbon to an oxo group, and ERG27 is responsible for the reduction of the keto group on the C-3. ERG28 has a role as a scaffold to help anchor ERG25, ERG26 and ERG27 to the endoplasmic reticulum and ERG29 regulates the activity of the iron-containing C4-methylsterol oxidase ERG25. Then, the sterol 24-C-methyltransferase ERG6 catalyzes the methyl transfer from S-adenosyl-methionine to the C-24 of zymosterol to form fecosterol. The C-8 sterol isomerase ERG2 catalyzes the reaction which results in unsaturation at C-7 in the B ring of sterols and thus converts fecosterol to episterol. The sterol-C5-desaturase ERG3 then catalyzes the introduction of a C-5 double bond in the B ring to produce 5-dehydroepisterol. The C-22 sterol desaturase ERG5 further converts 5-dehydroepisterol into ergosta-5,7,22,24(28)-tetraen-3beta-ol by forming the C-22(23) double bond in the sterol side chain. Finally, ergosta-5,7,22,24(28)-tetraen-3beta-ol is substrate of the C-24(28) sterol reductase ERG4 to produce ergosterol. In Saccharomyces cerevisiae (strain ATCC 204508 / S288c) (Baker's yeast), this protein is Delta(14)-sterol reductase ERG24.